Consider the following 150-residue polypeptide: UPF0336 protein SGR_2883 (150 aa).

Positions 10–116 (RTYPPTPAYE…STIEAVKSLA (107 aa)) constitute a MaoC-like domain.

This sequence belongs to the UPF0336 family.

The polypeptide is UPF0336 protein SGR_2883 (Streptomyces griseus subsp. griseus (strain JCM 4626 / CBS 651.72 / NBRC 13350 / KCC S-0626 / ISP 5235)).